The following is a 366-amino-acid chain: Phospho-N-acetylmuramoyl-pentapeptide-transferase (366 aa).

Transmembrane regions (helical) follow at residues 3–23 (QIFI…PVLI), 54–74 (GIAV…VGLV), 80–100 (PGVS…LGFA), 120–140 (LVGQ…FPNA), 161–181 (IAIG…YLVI), 197–217 (LASG…FWQF), 238–258 (LSML…WNAA), 262–282 (IFMG…LSVT), 288–308 (LMIL…IQVV), and 341–361 (FWLL…AEWL).

Belongs to the glycosyltransferase 4 family. MraY subfamily. Requires Mg(2+) as cofactor.

The protein resides in the cell membrane. It carries out the reaction UDP-N-acetyl-alpha-D-muramoyl-L-alanyl-gamma-D-glutamyl-meso-2,6-diaminopimeloyl-D-alanyl-D-alanine + di-trans,octa-cis-undecaprenyl phosphate = di-trans,octa-cis-undecaprenyl diphospho-N-acetyl-alpha-D-muramoyl-L-alanyl-D-glutamyl-meso-2,6-diaminopimeloyl-D-alanyl-D-alanine + UMP. It functions in the pathway cell wall biogenesis; peptidoglycan biosynthesis. Functionally, catalyzes the initial step of the lipid cycle reactions in the biosynthesis of the cell wall peptidoglycan: transfers peptidoglycan precursor phospho-MurNAc-pentapeptide from UDP-MurNAc-pentapeptide onto the lipid carrier undecaprenyl phosphate, yielding undecaprenyl-pyrophosphoryl-MurNAc-pentapeptide, known as lipid I. This Corynebacterium jeikeium (strain K411) protein is Phospho-N-acetylmuramoyl-pentapeptide-transferase.